We begin with the raw amino-acid sequence, 419 residues long: Subtilisin-like protease 2 (419 aa).

The first 16 residues, 1 to 16 (MQLLNFGLLLLPFVAG), serve as a signal peptide directing secretion. A propeptide spanning residues 17-122 (DLAPQPEPLL…VHPDQHVYLA (106 aa)) is cleaved from the precursor. An Inhibitor I9 domain is found at 36-122 (QYIVTLKEGL…VHPDQHVYLA (87 aa)). In terms of domain architecture, Peptidase S8 spans 131-419 (RWGLGYMSSK…IQERKFKLPK (289 aa)). Catalysis depends on charge relay system residues aspartate 169 and histidine 201. Residues asparagine 248, asparagine 261, and asparagine 348 are each glycosylated (N-linked (GlcNAc...) asparagine). Serine 357 functions as the Charge relay system in the catalytic mechanism. N-linked (GlcNAc...) asparagine glycosylation is present at asparagine 388.

The protein belongs to the peptidase S8 family.

Its subcellular location is the secreted. In terms of biological role, secreted subtilisin-like serine protease with keratinolytic activity that contributes to pathogenicity. This is Subtilisin-like protease 2 (SUB2) from Trichophyton verrucosum (Cattle ringworm fungus).